Here is a 137-residue protein sequence, read N- to C-terminus: NADH dehydrogenase [ubiquinone] 1 beta subcomplex subunit 7 (137 aa).

G2 carries N-myristoyl glycine lipidation. Positions R56–R98 constitute a CHCH domain. Residues C59–C69 carry the Cx9C motif 1 motif. Intrachain disulfides connect C59/C90 and C69/C80. Position 73 is a phosphoserine (S73). The Cx9C motif 2 motif lies at C80 to C90. The disordered stretch occupies residues Q110–L137.

The protein belongs to the complex I NDUFB7 subunit family. In terms of assembly, complex I is composed of 45 different subunits.

It localises to the mitochondrion inner membrane. Its subcellular location is the mitochondrion intermembrane space. Accessory subunit of the mitochondrial membrane respiratory chain NADH dehydrogenase (Complex I), that is believed not to be involved in catalysis. Complex I functions in the transfer of electrons from NADH to the respiratory chain. The immediate electron acceptor for the enzyme is believed to be ubiquinone. This chain is NADH dehydrogenase [ubiquinone] 1 beta subcomplex subunit 7 (NDUFB7), found in Bos taurus (Bovine).